Reading from the N-terminus, the 81-residue chain is Photosystem I iron-sulfur center (81 aa).

4Fe-4S ferredoxin-type domains follow at residues Ser-2–Trp-31 and Ile-39–Tyr-68. Positions 11, 14, 17, 21, 48, 51, 54, and 58 each coordinate [4Fe-4S] cluster.

In terms of assembly, the eukaryotic PSI reaction center is composed of at least 11 subunits. [4Fe-4S] cluster is required as a cofactor.

It is found in the plastid. The protein resides in the chloroplast thylakoid membrane. The catalysed reaction is reduced [plastocyanin] + hnu + oxidized [2Fe-2S]-[ferredoxin] = oxidized [plastocyanin] + reduced [2Fe-2S]-[ferredoxin]. In terms of biological role, apoprotein for the two 4Fe-4S centers FA and FB of photosystem I (PSI); essential for photochemical activity. FB is the terminal electron acceptor of PSI, donating electrons to ferredoxin. The C-terminus interacts with PsaA/B/D and helps assemble the protein into the PSI complex. Required for binding of PsaD and PsaE to PSI. PSI is a plastocyanin-ferredoxin oxidoreductase, converting photonic excitation into a charge separation, which transfers an electron from the donor P700 chlorophyll pair to the spectroscopically characterized acceptors A0, A1, FX, FA and FB in turn. The protein is Photosystem I iron-sulfur center of Arabis hirsuta (Hairy rock-cress).